Consider the following 286-residue polypeptide: Cysteine-rich repeat secretory protein 57 (286 aa).

A signal peptide spans 1–20; it reads METTKKLSVLLCLFFTMNQA. Residues 21–265 are Extracellular-facing; that stretch reads ISESDSDEHM…PSRSGSFSIR (245 aa). Gnk2-homologous domains lie at 29-131 and 137-247; these read HMAT…DKFF and TKPN…TSNS. N-linked (GlcNAc...) asparagine glycans are attached at residues asparagine 35, asparagine 40, asparagine 44, asparagine 60, asparagine 69, asparagine 90, asparagine 100, asparagine 108, asparagine 209, and asparagine 246. The helical transmembrane segment at 266–284 threads the bilayer; the sequence is GNNKILVGMILAVSVFAFL. Topologically, residues 285-286 are cytoplasmic; sequence GL.

This sequence belongs to the cysteine-rich repeat secretory protein family.

It localises to the membrane. The polypeptide is Cysteine-rich repeat secretory protein 57 (CRRSP57) (Arabidopsis thaliana (Mouse-ear cress)).